A 581-amino-acid chain; its full sequence is Major facilitator superfamily multidrug transporter NAG4 (581 aa).

The span at 1–14 shows a compositional bias: polar residues; that stretch reads MSHATDSTLDNASV. The interval 1–43 is disordered; it reads MSHATDSTLDNASVDSEKVRDFGDDLQNHPVQPTRSILSKIRS. Asparagine 11 carries an N-linked (GlcNAc...) asparagine glycan. A compositionally biased stretch (basic and acidic residues) spans 15 to 27; sequence DSEKVRDFGDDLQ. Asparagine 125 is a glycosylation site (N-linked (GlcNAc...) asparagine). Helical transmembrane passes span 132–152, 169–189, 199–219, 230–250, 261–281, 290–310, 365–385, 403–423, 447–467, 471–491, 510–530, and 544–564; these read WLYTLVLGAVCFVVALGSAIV, VIILASVTVFVIGFGVGPLVF, KPIYVVTLFIAVVFIVPCGAA, LIDGIAFSAPMTLIGGSLADI, AIFSAAPFLGPVCGPIFGGLL, WIYWTFLIVAGVFYAIFIAIV, IVFLMTIYMAICYGLLYMFFF, GVMFIPIGVGVIIATIAAPFF, LIPMMIACWFVPVGLFAFAWS, WVSWAGPCFSGLAAGFGFCCL, ALAAKTFVRSIWGACVPLFTI, and LMAFISLACCAIPYLFFFFGA.

This sequence belongs to the major facilitator superfamily. DHA1 family. Polyamines/proton antiporter (TC 2.A.1.2.16) subfamily.

The protein resides in the cell membrane. Functionally, MFS transporter involved in N-acetylglucosamine (GlcNAc) uptake. Confers resistance to cycloheximide, 4-nitroquinoline-N-oxide, and 1,10-phenanthroline, and contributes to virulence. This chain is Major facilitator superfamily multidrug transporter NAG4, found in Candida albicans (strain SC5314 / ATCC MYA-2876) (Yeast).